The sequence spans 480 residues: UDP-glycosyltransferase 72B1 (480 aa).

Histidine 19 acts as the Proton acceptor in catalysis. The active-site Charge relay is aspartate 117. 4 residues coordinate UDP: serine 277, tryptophan 346, alanine 347, and histidine 364. Residues serine 277, tryptophan 346, alanine 347, histidine 364, tryptophan 367, asparagine 368, serine 369, glutamate 372, tyrosine 386, glutamate 388, and glutamine 389 each contribute to the UDP-alpha-D-glucose site. Positions 368, 369, 372, and 386 each coordinate UDP.

This sequence belongs to the UDP-glycosyltransferase family.

It carries out the reaction hydroquinone + UDP-alpha-D-glucose = hydroquinone O-beta-D-glucopyranoside + UDP + H(+). In terms of biological role, bifunctional O-glycosyltransferase and N-glycosyltransferase that can detoxify xenobiotics. Possesses high activity to metabolize the persistent pollutants 2,4,5-trichlorophenol (TCP) and 3,4-dichloroaniline (DCA). Also active on benzoates and benzoate derivatives in vitro. The protein is UDP-glycosyltransferase 72B1 (UGT72B1) of Arabidopsis thaliana (Mouse-ear cress).